A 364-amino-acid chain; its full sequence is tRNA 2-selenouridine synthase (364 aa).

The region spanning 14 to 137 is the Rhodanese domain; sequence LIADTPIIDV…LRQTAIQATI (124 aa). Cys-97 serves as the catalytic S-selanylcysteine intermediate.

This sequence belongs to the SelU family. In terms of assembly, monomer.

It catalyses the reaction 5-methylaminomethyl-2-thiouridine(34) in tRNA + selenophosphate + (2E)-geranyl diphosphate + H2O + H(+) = 5-methylaminomethyl-2-selenouridine(34) in tRNA + (2E)-thiogeraniol + phosphate + diphosphate. It carries out the reaction 5-methylaminomethyl-2-thiouridine(34) in tRNA + (2E)-geranyl diphosphate = 5-methylaminomethyl-S-(2E)-geranyl-thiouridine(34) in tRNA + diphosphate. The enzyme catalyses 5-methylaminomethyl-S-(2E)-geranyl-thiouridine(34) in tRNA + selenophosphate + H(+) = 5-methylaminomethyl-2-(Se-phospho)selenouridine(34) in tRNA + (2E)-thiogeraniol. The catalysed reaction is 5-methylaminomethyl-2-(Se-phospho)selenouridine(34) in tRNA + H2O = 5-methylaminomethyl-2-selenouridine(34) in tRNA + phosphate. In terms of biological role, involved in the post-transcriptional modification of the uridine at the wobble position (U34) of tRNA(Lys), tRNA(Glu) and tRNA(Gln). Catalyzes the conversion of 2-thiouridine (S2U-RNA) to 2-selenouridine (Se2U-RNA). Acts in a two-step process involving geranylation of 2-thiouridine (S2U) to S-geranyl-2-thiouridine (geS2U) and subsequent selenation of the latter derivative to 2-selenouridine (Se2U) in the tRNA chain. In Escherichia coli O81 (strain ED1a), this protein is tRNA 2-selenouridine synthase.